We begin with the raw amino-acid sequence, 319 residues long: Ribosomal RNA small subunit methyltransferase H (319 aa).

S-adenosyl-L-methionine contacts are provided by residues 35–37, aspartate 55, phenylalanine 84, aspartate 104, and glutamine 111; that span reads AGH.

It belongs to the methyltransferase superfamily. RsmH family.

It is found in the cytoplasm. The catalysed reaction is cytidine(1402) in 16S rRNA + S-adenosyl-L-methionine = N(4)-methylcytidine(1402) in 16S rRNA + S-adenosyl-L-homocysteine + H(+). Specifically methylates the N4 position of cytidine in position 1402 (C1402) of 16S rRNA. This is Ribosomal RNA small subunit methyltransferase H from Enterococcus hirae.